We begin with the raw amino-acid sequence, 811 residues long: LPS-assembly protein LptD (811 aa).

The signal sequence occupies residues 1 to 17 (MTEPNRARKTRQRTAFA). Positions 1-22 (MTEPNRARKTRQRTAFAAPDQR) are disordered.

It belongs to the LptD family. In terms of assembly, component of the lipopolysaccharide transport and assembly complex. Interacts with LptE and LptA.

The protein localises to the cell outer membrane. Together with LptE, is involved in the assembly of lipopolysaccharide (LPS) at the surface of the outer membrane. The chain is LPS-assembly protein LptD from Ralstonia nicotianae (strain ATCC BAA-1114 / GMI1000) (Ralstonia solanacearum).